An 872-amino-acid polypeptide reads, in one-letter code: MRKSYSPSDIESVVQKHWYKNKTFAVIEDSNKEKYYCLSMIPYPSGNLHMGHVRNYTIGDVISRYQRMLGKNVLQPIGWDAFGLPAEHAAIKNNTDPSIWTYSNINYMKSQLQSLGFAYDWNRELITCHPDYYRWEQWFFTVLYKKGLVYKKTASVNWCSYHKTVLANEQVTNNCCWRCHTPVKYKRIPQWFIRITNYADQLLHGLDQLTHWPEQVKIMQRNWIGRSKGVNVTFRIENSNDTLTIYMTRLDIFMGITYLVISTDHPIALQVAKTDLNVAHFIQKNDDFYTKLNKKNVFYFEKMGMPTHIYAIHPITNSKLPIWVANFVIPMECDGMGAAISIPAHNQQDWEFAYKYNLPIKPVIKNLDAIEPNIAMQAQETTCDGILFNSGEFDGLSSCTASNAIVKSLIARGVAQYKVNYRLKDWGISRQRYWGVPIPMVTLSNGVVKPVLLDRLPVILPKNMSTIHRSNDGYVDNSLKMYPNWIQTTYKGQAAIRDTDTFDTFMESSWYYARYTCPRYNDAMLNVHAANYWLPVDQYIGGIEHAIMHLLYFRFYHKLMRDEGLVYSDEPAIRLLCQGMVLADSFYYVSPNGQHIWVDPTHVTIKRDRIGGIVKAIDKDGRDLIYDGMCKMSKSKNNGIDPNIIIEKYGADAVRFFIMFAAPIEAPLEWKESGIEGAQRFLKRIWNLIYHHIQDGPVDALSVVILNHAQKFIRYNVHKTIEKVTDDIDRRQSFNTALSAIMKLVKKLYNAPKTSMQDRAVLQEALLVIVRLLYPFTPHISFILWKALGGSEDIDNATWPIVDTQAIQNDRTLVLVQINGKMRHKVFAPLNSDKNVVYKLLETEGVLNKYLIGKKINNIIYVPNRVINIIAK.

The 'HIGH' region motif lies at 42 to 52 (PYPSGNLHMGH). Positions 631–635 (KMSKS) match the 'KMSKS' region motif. ATP is bound at residue lysine 634.

It belongs to the class-I aminoacyl-tRNA synthetase family.

The protein localises to the cytoplasm. It catalyses the reaction tRNA(Leu) + L-leucine + ATP = L-leucyl-tRNA(Leu) + AMP + diphosphate. This chain is Leucine--tRNA ligase, found in Blochmanniella pennsylvanica (strain BPEN).